The chain runs to 432 residues: Adenylosuccinate synthetase (432 aa).

Residues 11–17 (GDEGKGK) and 39–41 (GHT) contribute to the GTP site. Asp12 (proton acceptor) is an active-site residue. Residues Asp12 and Gly39 each contribute to the Mg(2+) site. IMP is bound by residues 12–15 (DEGK), 37–40 (NAGH), Thr134, Arg148, Asn230, Thr245, and Arg309. The Proton donor role is filled by His40. 305 to 311 (VTTGRKR) lines the substrate pocket. Residues Arg311, 337 to 339 (KLD), and 419 to 421 (GTG) contribute to the GTP site.

This sequence belongs to the adenylosuccinate synthetase family. Homodimer. Requires Mg(2+) as cofactor.

It localises to the cytoplasm. The catalysed reaction is IMP + L-aspartate + GTP = N(6)-(1,2-dicarboxyethyl)-AMP + GDP + phosphate + 2 H(+). It participates in purine metabolism; AMP biosynthesis via de novo pathway; AMP from IMP: step 1/2. Its function is as follows. Plays an important role in the de novo pathway and in the salvage pathway of purine nucleotide biosynthesis. Catalyzes the first committed step in the biosynthesis of AMP from IMP. The chain is Adenylosuccinate synthetase from Candida glabrata (strain ATCC 2001 / BCRC 20586 / JCM 3761 / NBRC 0622 / NRRL Y-65 / CBS 138) (Yeast).